A 251-amino-acid polypeptide reads, in one-letter code: Homeobox protein notochord (251 aa).

Over residues 1–14 (MPSPRPRGSPPPAP) the composition is skewed to pro residues. The segment at 1–47 (MPSPRPRGSPPPAPSGSRVRPPRSGRSPAPRSPTGPNTPRAPGRFES) is disordered. The span at 15–35 (SGSRVRPPRSGRSPAPRSPTG) shows a compositional bias: low complexity. Positions 156-215 (QKRVRTMFNLEQLEELEKVFAKQHNLVGKKRAQLAARLKLTENQVRVWFQNRRVKYQKQQ) form a DNA-binding region, homeobox. Over residues 224–242 (AEAASLDEPSSSSIASIQS) the composition is skewed to low complexity. The segment at 224–251 (AEAASLDEPSSSSIASIQSDDAESGVDG) is disordered.

The protein resides in the nucleus. Transcription regulator acting downstream of both FOXA2 and Brachyury (T) during notochord development. Required for node morphogenesis. Is essential for cilia formation in the posterior notochord (PNC) and for left-right patterning; acts upstream of FOXJ1 and RFX3 in this process and is required for the expression of various components important for axonemal assembly and function. Plays a role in regulating axial versus paraxial cell fate. Activates the transcription of ciliary proteins C11orf97 homolog, FAM183B and SPACA9 in the embryonic ventral node. The polypeptide is Homeobox protein notochord (NOTO) (Homo sapiens (Human)).